Here is a 177-residue protein sequence, read N- to C-terminus: Large ribosomal subunit protein uL5 (177 aa).

Belongs to the universal ribosomal protein uL5 family. As to quaternary structure, part of the 50S ribosomal subunit; part of the 5S rRNA/L5/L18/L25 subcomplex. Contacts the 5S rRNA and the P site tRNA. Forms a bridge to the 30S subunit in the 70S ribosome.

Its function is as follows. This is one of the proteins that bind and probably mediate the attachment of the 5S RNA into the large ribosomal subunit, where it forms part of the central protuberance. In the 70S ribosome it contacts protein S13 of the 30S subunit (bridge B1b), connecting the 2 subunits; this bridge is implicated in subunit movement. Contacts the P site tRNA; the 5S rRNA and some of its associated proteins might help stabilize positioning of ribosome-bound tRNAs. The polypeptide is Large ribosomal subunit protein uL5 (Wolbachia sp. subsp. Brugia malayi (strain TRS)).